Reading from the N-terminus, the 184-residue chain is Large ribosomal subunit protein eL14 (184 aa).

A disordered region spans residues 149 to 184 (KNAKKVDSTPAAKKRIEKARAARKAKPTAAKEKSKK). Positions 160 to 174 (AKKRIEKARAARKAK) are enriched in basic residues.

This sequence belongs to the eukaryotic ribosomal protein eL14 family.

This Trypanosoma congolense protein is Large ribosomal subunit protein eL14.